Consider the following 62-residue polypeptide: Photosystem II reaction center protein Z (62 aa).

Helical transmembrane passes span 8–28 (AVFA…VVFA) and 41–61 (FSGT…NSLI).

The protein belongs to the PsbZ family. In terms of assembly, PSII is composed of 1 copy each of membrane proteins PsbA, PsbB, PsbC, PsbD, PsbE, PsbF, PsbH, PsbI, PsbJ, PsbK, PsbL, PsbM, PsbT, PsbY, PsbZ, Psb30/Ycf12, at least 3 peripheral proteins of the oxygen-evolving complex and a large number of cofactors. It forms dimeric complexes.

It is found in the plastid. It localises to the chloroplast thylakoid membrane. In terms of biological role, may control the interaction of photosystem II (PSII) cores with the light-harvesting antenna, regulates electron flow through the 2 photosystem reaction centers. PSII is a light-driven water plastoquinone oxidoreductase, using light energy to abstract electrons from H(2)O, generating a proton gradient subsequently used for ATP formation. The polypeptide is Photosystem II reaction center protein Z (Piper cenocladum (Ant piper)).